Consider the following 418-residue polypeptide: ORC1-type DNA replication protein 2 (418 aa).

ATP is bound by residues 72–76 (TGKTV), Y218, and R230.

This sequence belongs to the CDC6/cdc18 family.

Functionally, involved in regulation of DNA replication. This is ORC1-type DNA replication protein 2 (cdc6-2) from Sulfurisphaera tokodaii (strain DSM 16993 / JCM 10545 / NBRC 100140 / 7) (Sulfolobus tokodaii).